Consider the following 80-residue polypeptide: Reactive oxygen species modulator 1 (80 aa).

The helical transmembrane segment at 22 to 44 threads the bilayer; that stretch reads MGFMMGFAVGMAAGAMFGTFSCL. The segment at 42 to 60 is sufficient for antibacterial activity; sequence SCLRIGMRGRELMGGVGKT.

This sequence belongs to the MGR2 family.

It is found in the mitochondrion inner membrane. Its function is as follows. Has antibacterial activity against a variety of bacteria including S.aureus, P.aeruginosa and M.tuberculosis. Acts by inducing bacterial membrane breakage. In terms of biological role, induces production of reactive oxygen species (ROS) which are necessary for cell proliferation. May play a role in inducing oxidative DNA damage and replicative senescence. May play a role in the coordination of mitochondrial morphology and cell proliferation. The protein is Reactive oxygen species modulator 1 (romo1) of Danio rerio (Zebrafish).